We begin with the raw amino-acid sequence, 356 residues long: UDP-N-acetylglucosamine--N-acetylmuramyl-(pentapeptide) pyrophosphoryl-undecaprenol N-acetylglucosamine transferase (356 aa).

UDP-N-acetyl-alpha-D-glucosamine contacts are provided by residues 15–17, asparagine 127, arginine 163, serine 191, isoleucine 244, 263–268, and glutamine 288; these read TGG and ALTVSE.

It belongs to the glycosyltransferase 28 family. MurG subfamily.

It is found in the cell inner membrane. The catalysed reaction is di-trans,octa-cis-undecaprenyl diphospho-N-acetyl-alpha-D-muramoyl-L-alanyl-D-glutamyl-meso-2,6-diaminopimeloyl-D-alanyl-D-alanine + UDP-N-acetyl-alpha-D-glucosamine = di-trans,octa-cis-undecaprenyl diphospho-[N-acetyl-alpha-D-glucosaminyl-(1-&gt;4)]-N-acetyl-alpha-D-muramoyl-L-alanyl-D-glutamyl-meso-2,6-diaminopimeloyl-D-alanyl-D-alanine + UDP + H(+). It participates in cell wall biogenesis; peptidoglycan biosynthesis. Functionally, cell wall formation. Catalyzes the transfer of a GlcNAc subunit on undecaprenyl-pyrophosphoryl-MurNAc-pentapeptide (lipid intermediate I) to form undecaprenyl-pyrophosphoryl-MurNAc-(pentapeptide)GlcNAc (lipid intermediate II). This Yersinia pestis (strain Pestoides F) protein is UDP-N-acetylglucosamine--N-acetylmuramyl-(pentapeptide) pyrophosphoryl-undecaprenol N-acetylglucosamine transferase.